The chain runs to 136 residues: Large ribosomal subunit protein uL16 (136 aa).

The segment covering 1-17 (MLQPKRTKFRKRHKGRN) has biased composition (basic residues). The segment at 1-21 (MLQPKRTKFRKRHKGRNRGLA) is disordered.

It belongs to the universal ribosomal protein uL16 family. Part of the 50S ribosomal subunit.

Binds 23S rRNA and is also seen to make contacts with the A and possibly P site tRNAs. The protein is Large ribosomal subunit protein uL16 of Buchnera aphidicola subsp. Acyrthosiphon kondoi (Acyrthosiphon kondoi symbiotic bacterium).